The sequence spans 1341 residues: DNA-directed RNA polymerase subunit beta (1341 aa).

This sequence belongs to the RNA polymerase beta chain family. As to quaternary structure, the RNAP catalytic core consists of 2 alpha, 1 beta, 1 beta' and 1 omega subunit. When a sigma factor is associated with the core the holoenzyme is formed, which can initiate transcription.

The enzyme catalyses RNA(n) + a ribonucleoside 5'-triphosphate = RNA(n+1) + diphosphate. Functionally, DNA-dependent RNA polymerase catalyzes the transcription of DNA into RNA using the four ribonucleoside triphosphates as substrates. The protein is DNA-directed RNA polymerase subunit beta of Pseudoalteromonas translucida (strain TAC 125).